The sequence spans 129 residues: Fluoride-specific ion channel FluC 2 (129 aa).

Residues 19–39 traverse the membrane as a helical segment; that stretch reads GLGLVVPAAAVGGFPLGTLFI. Na(+) is bound by residues Gly74 and Thr77. Residues 95–115 traverse the membrane as a helical segment; the sequence is FGMAAVYIAASLFGGLLASWA.

It belongs to the fluoride channel Fluc/FEX (TC 1.A.43) family.

The protein localises to the cell membrane. It catalyses the reaction fluoride(in) = fluoride(out). Its activity is regulated as follows. Na(+) is not transported, but it plays an essential structural role and its presence is essential for fluoride channel function. Its function is as follows. Fluoride-specific ion channel. Important for reducing fluoride concentration in the cell, thus reducing its toxicity. In Geobacillus kaustophilus (strain HTA426), this protein is Fluoride-specific ion channel FluC 2.